The sequence spans 313 residues: MPERPSVPRHLLGIEGLSAEQLVPFLDLAESYALLSRSRSAPRDALRGRTVINLFYEDSTRTRTSFELAGKRLGADVINMSVATSSVNKGETLLDTAATLNAMRCDLLVVRHAQSGAPALLSRKVEASVVNAGDGTHEHPTQALLDALTIRRHFGRLEGLTVAICGDVGHSRVARSNIHLLTAFGNRVRLAGPPTLLPGAMAGLGNVELYSDMDRALEGADVVMSLRLQKERMGAGLVPSAREYFHFFGLDRRRLALAKPGALVMHPGPMNRGVEIASDVADSDQSVISEQVEMGVAVRMAVLDRLSRARMPA.

Carbamoyl phosphate is bound by residues R61 and T62. Residue K89 coordinates L-aspartate. R111, H139, and Q142 together coordinate carbamoyl phosphate. L-aspartate-binding residues include R172 and R227. The carbamoyl phosphate site is built by G268 and P269.

It belongs to the aspartate/ornithine carbamoyltransferase superfamily. ATCase family. As to quaternary structure, heterododecamer (2C3:3R2) of six catalytic PyrB chains organized as two trimers (C3), and six regulatory PyrI chains organized as three dimers (R2).

It catalyses the reaction carbamoyl phosphate + L-aspartate = N-carbamoyl-L-aspartate + phosphate + H(+). It participates in pyrimidine metabolism; UMP biosynthesis via de novo pathway; (S)-dihydroorotate from bicarbonate: step 2/3. Its function is as follows. Catalyzes the condensation of carbamoyl phosphate and aspartate to form carbamoyl aspartate and inorganic phosphate, the committed step in the de novo pyrimidine nucleotide biosynthesis pathway. This chain is Aspartate carbamoyltransferase catalytic subunit, found in Gluconobacter oxydans (strain 621H) (Gluconobacter suboxydans).